A 320-amino-acid polypeptide reads, in one-letter code: Protein LATERAL ROOT PRIMORDIUM 1 (320 aa).

A disordered region spans residues 90–110 (QTTVGTSSNNSGSGSGASGTA). C112, C115, C123, C128, C132, and C139 together coordinate Zn(2+). Residues 112–139 (CQDCGNQAKKECKQRRCRTCCKSRGFDC) constitute a DNA-binding region (zn(2)-C6 fungal-type; degenerate). Residues 150–223 (AARRRERQVM…QDGGGSREAW (74 aa)) are disordered. The segment covering 168-177 (GSSLSTSSGT) has biased composition (low complexity). Polar residues predominate over residues 193-214 (ATSHTSTSNTPPQSFETSSSRQ). The Required for homo- and heterodimerization motif lies at 256–259 (IGGH).

The protein belongs to the SHI protein family. As to quaternary structure, homodimer. Restricted to lateral root primordia.

The protein resides in the nucleus. Functionally, transcription activator that binds DNA on 5'-ACTCTAC-3' and promotes auxin homeostasis-regulating gene expression (e.g. YUC genes), as well as genes affecting stamen development, cell expansion and timing of flowering. Synergistically with other SHI-related proteins, regulates gynoecium, stamen and leaf development in a dose-dependent manner, controlling apical-basal patterning. Promotes style and stigma formation, and influence vascular development during gynoecium development. May also have a role in the formation and/or maintenance of the shoot apical meristem (SAM). Modulates root growth. In Arabidopsis thaliana (Mouse-ear cress), this protein is Protein LATERAL ROOT PRIMORDIUM 1 (LRP1).